The following is a 266-amino-acid chain: 22 kDa alpha-zein 8 (266 aa).

The first 21 residues, 1–21, serve as a signal peptide directing secretion; sequence MATKILALLALLALFVSATNA.

It belongs to the zein family.

Functionally, zeins are major seed storage proteins. This is 22 kDa alpha-zein 8 from Zea mays (Maize).